Here is a 297-residue protein sequence, read N- to C-terminus: Streptogrisin-A (297 aa).

An N-terminal signal peptide occupies residues 1–38 (MTFKRFSPLSSTSRYARLLAVASGLVAAAALATPSAVA). Residues 39 to 115 (APEAESKATV…VKRAEGKFTP (77 aa)) constitute a propeptide that is removed on maturation. Residues cysteine 130 and cysteine 150 are joined by a disulfide bond. Catalysis depends on charge relay system residues histidine 149, aspartate 171, and serine 253. Residues cysteine 247 and cysteine 274 are joined by a disulfide bond.

This sequence belongs to the peptidase S1 family. As to quaternary structure, monomer.

The enzyme catalyses Hydrolysis of proteins with specificity similar to chymotrypsin.. Its function is as follows. Has a primary specificity for large aliphatic or aromatic amino acids. This chain is Streptogrisin-A (sprA), found in Streptomyces griseus.